Consider the following 865-residue polypeptide: Envelope glycoprotein gp160 (865 aa).

Positions Met-1–Ser-20 are cleaved as a signal peptide. The Extracellular segment spans residues Lys-21 to Gly-705. A glycan (N-linked (GlcNAc...) asparagine; by host) is linked at Asn-35. Residues Cys-42 and Cys-55 are joined by a disulfide bond. 20 N-linked (GlcNAc...) asparagine; by host glycosylation sites follow: Asn-68, Asn-117, Asn-150, Asn-165, Asn-195, Asn-198, Asn-210, Asn-252, Asn-255, Asn-266, Asn-276, Asn-282, Asn-294, Asn-306, Asn-316, Asn-373, Asn-414, Asn-451, Asn-488, and Asn-491. 5 disulfide bridges follow: Cys-101-Cys-218, Cys-108-Cys-209, Cys-113-Cys-166, Cys-231-Cys-261, and Cys-241-Cys-253. Residues Cys-113–Asn-165 form a V1 region. The interval Cys-166–Cys-209 is V2. Residues Cys-311–Trp-343 are V3. Cys-311 and Cys-344 are oxidised to a cystine. Residues Cys-396 and Cys-471 are joined by a disulfide bond. The interval Cys-403–Tyr-444 is V4. Residues Lys-487–Leu-494 form a V5 region. Residues Val-537–Ala-557 are fusion peptide. The immunosuppression stretch occupies residues Leu-600–Arg-616. Asn-645 and Asn-661 each carry an N-linked (GlcNAc...) asparagine; by host glycan. Positions Glu-650–Lys-675 form a coiled coil. The interval Lys-682–Lys-703 is MPER; binding to GalCer. The chain crosses the membrane as a helical span at residues Phe-706 to Val-726. Residues Arg-727 to Asn-865 lie on the Cytoplasmic side of the membrane. Positions Tyr-732 to Leu-735 match the YXXL motif; contains endocytosis signal motif. The interval Val-744–Arg-763 is disordered.

In terms of assembly, the mature envelope protein (Env) consists of a homotrimer of non-covalently associated gp120-gp41 heterodimers. The resulting complex protrudes from the virus surface as a spike. Interacts with host CD4 and CCR5. Gp120 also interacts with the C-type lectins CD209/DC-SIGN and CLEC4M/DC-SIGNR (collectively referred to as DC-SIGN(R)). As to quaternary structure, the mature envelope protein (Env) consists of a homotrimer of non-covalently associated gp120-gp41 heterodimers. The resulting complex protrudes from the virus surface as a spike. Post-translationally, specific enzymatic cleavages in vivo yield mature proteins. Envelope glycoproteins are synthesized as an inactive precursor that is heavily N-glycosylated and processed likely by host cell furin in the Golgi to yield the mature SU and TM proteins. The cleavage site between SU and TM requires the minimal sequence [KR]-X-[KR]-R.

The protein localises to the virion membrane. The protein resides in the host cell membrane. Its subcellular location is the host endosome membrane. Functionally, the surface protein gp120 (SU) attaches the virus to the host lymphoid cell by binding to the primary receptor CD4. This interaction induces a structural rearrangement creating a high affinity binding site for a chemokine coreceptor like CCR5. This peculiar 2 stage receptor-interaction strategy allows gp120 to maintain the highly conserved coreceptor-binding site in a cryptic conformation, protected from neutralizing antibodies. These changes are transmitted to the transmembrane protein gp41 and are thought to activate its fusogenic potential by unmasking its fusion peptide. In terms of biological role, surface protein gp120 (SU) may target the virus to gut-associated lymphoid tissue (GALT) by binding host ITGA4/ITGB7 (alpha-4/beta-7 integrins), a complex that mediates T-cell migration to the GALT. Interaction between gp120 and ITGA4/ITGB7 would allow the virus to enter GALT early in the infection, infecting and killing most of GALT's resting CD4+ T-cells. This T-cell depletion is believed to be the major insult to the host immune system leading to AIDS. The surface protein gp120 is a ligand for CD209/DC-SIGN and CLEC4M/DC-SIGNR, which are respectively found on dendritic cells (DCs), and on endothelial cells of liver sinusoids and lymph node sinuses. These interactions allow capture of viral particles at mucosal surfaces by these cells and subsequent transmission to permissive cells. DCs are professional antigen presenting cells, critical for host immunity by inducing specific immune responses against a broad variety of pathogens. They act as sentinels in various tissues where they take up antigen, process it, and present it to T-cells following migration to lymphoid organs. SIV subverts the migration properties of dendritic cells to gain access to CD4+ T-cells in lymph nodes. Virus transmission to permissive T-cells occurs either in trans (without DCs infection, through viral capture and transmission), or in cis (following DCs productive infection, through the usual CD4-gp120 interaction), thereby inducing a robust infection. In trans infection, bound virions remain infectious over days and it is proposed that they are not degraded, but protected in non-lysosomal acidic organelles within the DCs close to the cell membrane thus contributing to the viral infectious potential during DCs' migration from the periphery to the lymphoid tissues. On arrival at lymphoid tissues, intact virions recycle back to DCs' cell surface allowing virus transmission to CD4+ T-cells. Virion capture also seems to lead to MHC-II-restricted viral antigen presentation, and probably to the activation of SIV-specific CD4+ cells. Its function is as follows. The transmembrane protein gp41 (TM) acts as a class I viral fusion protein. Under the current model, the protein has at least 3 conformational states: pre-fusion native state, pre-hairpin intermediate state, and post-fusion hairpin state. During fusion of viral and target intracellular membranes, the coiled coil regions (heptad repeats) assume a trimer-of-hairpins structure, positioning the fusion peptide in close proximity to the C-terminal region of the ectodomain. The formation of this structure appears to drive apposition and subsequent fusion of viral and target cell membranes. Complete fusion occurs in host cell endosomes. The virus undergoes clathrin-dependent internalization long before endosomal fusion, thus minimizing the surface exposure of conserved viral epitopes during fusion and reducing the efficacy of inhibitors targeting these epitopes. Membranes fusion leads to delivery of the nucleocapsid into the cytoplasm. Functionally, the envelope glycoprotein gp160 precursor down-modulates cell surface CD4 antigen by interacting with it in the endoplasmic reticulum and blocking its transport to the cell surface. In terms of biological role, the gp120-gp41 heterodimer allows rapid transcytosis of the virus through CD4 negative cells such as simple epithelial monolayers of the intestinal, rectal and endocervical epithelial barriers. Both gp120 and gp41 specifically recognize glycosphingolipids galactosyl-ceramide (GalCer) or 3' sulfo-galactosyl-ceramide (GalS) present in the lipid rafts structures of epithelial cells. Binding to these alternative receptors allows the rapid transcytosis of the virus through the epithelial cells. This transcytotic vesicle-mediated transport of virions from the apical side to the basolateral side of the epithelial cells does not involve infection of the cells themselves. The chain is Envelope glycoprotein gp160 (env) from Simian immunodeficiency virus agm.vervet (isolate AGM TYO-1) (SIV-agm.ver).